The following is a 261-amino-acid chain: Lysoplasmalogenase (261 aa).

The next 8 helical transmembrane spans lie at 29 to 49 (GWVVAGWAGLAYGVYLTVIAL), 65 to 85 (PAFKASMAVLLAAAAVAHPIG), 90 to 107 (WLVPALLLSATGDWLLAI), 111 to 133 (TWAFVFGLGAFLLAHLCFIGALL), 146 to 166 (VAAVVAMCVASAGLLVWFWPH), 172 to 192 (LTIPVTVYIVALSAMVCTALL), 197 to 217 (TIWTAVGAVCFAASDSMIGIG), and 227 to 247 (AVPIWWSYAAAEILITAGFFF).

This sequence belongs to the TMEM86 family.

It localises to the cell membrane. The enzyme catalyses a 1-O-(1Z-alkenyl)-sn-glycero-3-phosphocholine + H2O = a 2,3-saturated aldehyde + sn-glycerol 3-phosphocholine. It catalyses the reaction a 1-O-(1Z-alkenyl)-sn-glycero-3-phosphoethanolamine + H2O = a 2,3-saturated aldehyde + sn-glycero-3-phosphoethanolamine. Functionally, specifically hydrolyzes the vinyl ether bond of lysoplasmenylcholine (pLPC) and lysoplasmenylethanolamine (pLPE) to release a fatty aldehyde and glycerophospho-choline or glycerophospho-ethanolamine. The polypeptide is Lysoplasmalogenase (Mycobacterium bovis (strain ATCC BAA-935 / AF2122/97)).